A 130-amino-acid chain; its full sequence is Fumarate reductase subunit C (130 aa).

Transmembrane regions (helical) follow at residues 33 to 53 (AVTT…LKGG), 60 to 80 (FVTF…LLGA), and 109 to 129 (VIKL…GIAL).

It belongs to the FrdC family. In terms of assembly, part of an enzyme complex containing four subunits: a flavoprotein (FrdA), an iron-sulfur protein (FrdB), and two hydrophobic anchor proteins (FrdC and FrdD).

The protein localises to the cell inner membrane. Functionally, two distinct, membrane-bound, FAD-containing enzymes are responsible for the catalysis of fumarate and succinate interconversion; fumarate reductase is used in anaerobic growth, and succinate dehydrogenase is used in aerobic growth. Anchors the catalytic components of the fumarate reductase complex to the cell inner membrane, binds quinones. The sequence is that of Fumarate reductase subunit C from Photorhabdus laumondii subsp. laumondii (strain DSM 15139 / CIP 105565 / TT01) (Photorhabdus luminescens subsp. laumondii).